Reading from the N-terminus, the 185-residue chain is Ribosome-recycling factor (185 aa).

It belongs to the RRF family.

The protein localises to the cytoplasm. Functionally, responsible for the release of ribosomes from messenger RNA at the termination of protein biosynthesis. May increase the efficiency of translation by recycling ribosomes from one round of translation to another. The polypeptide is Ribosome-recycling factor (Lacticaseibacillus casei (strain BL23) (Lactobacillus casei)).